The following is a 697-amino-acid chain: Elongation factor G 2 (697 aa).

In terms of domain architecture, tr-type G spans 5-280 (SKYRNIGIFA…AVVDYLPDPV (276 aa)). GTP is bound by residues 14–21 (AHVDAGKT), 78–82 (DTPGH), and 132–135 (NKLD).

Belongs to the TRAFAC class translation factor GTPase superfamily. Classic translation factor GTPase family. EF-G/EF-2 subfamily.

It localises to the cytoplasm. In terms of biological role, catalyzes the GTP-dependent ribosomal translocation step during translation elongation. During this step, the ribosome changes from the pre-translocational (PRE) to the post-translocational (POST) state as the newly formed A-site-bound peptidyl-tRNA and P-site-bound deacylated tRNA move to the P and E sites, respectively. Catalyzes the coordinated movement of the two tRNA molecules, the mRNA and conformational changes in the ribosome. The protein is Elongation factor G 2 of Shewanella frigidimarina (strain NCIMB 400).